The chain runs to 310 residues: Ornithine carbamoyltransferase (310 aa).

Carbamoyl phosphate-binding positions include 57-60, Q84, R108, and 135-138; these read STRT and HPCQ. L-ornithine is bound by residues N166, D229, and 233 to 234; that span reads SM. Carbamoyl phosphate-binding positions include 269 to 270 and R297; that span reads CL.

The protein belongs to the aspartate/ornithine carbamoyltransferase superfamily. OTCase family.

It is found in the cytoplasm. The catalysed reaction is carbamoyl phosphate + L-ornithine = L-citrulline + phosphate + H(+). It functions in the pathway amino-acid biosynthesis; L-arginine biosynthesis; L-arginine from L-ornithine and carbamoyl phosphate: step 1/3. Functionally, reversibly catalyzes the transfer of the carbamoyl group from carbamoyl phosphate (CP) to the N(epsilon) atom of ornithine (ORN) to produce L-citrulline. This is Ornithine carbamoyltransferase from Thermosynechococcus vestitus (strain NIES-2133 / IAM M-273 / BP-1).